Consider the following 353-residue polypeptide: Protein MGF 360-9L (353 aa).

Belongs to the asfivirus MGF 360 family. In terms of assembly, interacts with host STAT1; this interaction mediates STAT1 degradation through apoptosis. Interacts with host STAT2; this interaction mediates STAT2 degradation through the proteasome.

It localises to the host cytoplasm. Functionally, plays a role in virus cell tropism, and may be required for efficient virus replication in macrophages. In addition, inhibits IFN-beta-induced IFN-stimulated genes (ISGs) transcription. Mechanistically, degrades host STAT1 and STAT2 through apoptosis and ubiquitin-proteasome pathways respectively. This is Protein MGF 360-9L from African swine fever virus (isolate Tick/Malawi/Lil 20-1/1983) (ASFV).